The following is a 623-amino-acid chain: MEGYHKPDQQKLQALKDTANRLRISSIQATTAAGSGHPTSCCSAAEIMAVLFFHTMRYKALDPRNPHNDRFVLSKGHAAPILYAVWAEAGFLPEAELLNLRKISSDLDGHPVPKQAFTDVATGSLGQGLGAACGMAYTGKYFDKASYRVYCMLGDGEVSEGSVWEAMAFAGIYKLDNLVAIFDINRLGQSDPAPLQHQVDVYQKRCEAFGWHAIIVDGHSVEELCKAFGQAKHQPTAIIAKTFKGRGITGIEDKEAWHGKPLPKNMAEQIIQEIYSQVQSKKKILATPPQEDAPSVDIANIRMPTPPNYKVGDKIATRKAYGLALAKLGHASDRIIALDGDTKNSTFSELFKKEHPDRFIECYIAEQNMVSIAVGCATRDRTVPFCSTFAAFFTRAFDQIRMAAISESNINLCGSHCGVSIGEDGPSQMALEDLAMFRSVPMSTVFYPSDGVATEKAVELAANTKGICFIRTSRPENAIIYSNNEDFQVGQAKVVLKSKDDQVTVIGAGVTLHEALAAAEMLKKEKIGVRVLDPFTIKPLDKKLILDCARATKGRILTVEDHYYEGGIGEAVSAVVVGEPGVTVTRLAVSQVPRSGKPAELLKMFGIDKDAIVQAVKGLVTKG.

Met-1 is subject to N-acetylmethionine. 2 positions are modified to N6-acetyllysine: Lys-6 and Lys-11. His-37 is a substrate binding site. Thiamine diphosphate-binding residues include Ser-40 and His-77. Ser-104 is modified (phosphoserine). Residue 123-125 (GSL) coordinates thiamine diphosphate. At Lys-144 the chain carries N6-acetyllysine. Asp-155 is a binding site for Mg(2+). Thiamine diphosphate-binding residues include Gly-156 and Asn-185. Residues Asn-185 and Leu-187 each coordinate Mg(2+). N6-acetyllysine is present on residues Lys-204, Lys-232, and Lys-241. Lys-244 and His-258 together coordinate thiamine diphosphate. A substrate-binding site is contributed by His-258. Lys-260 bears the N6-acetyllysine mark. Phosphotyrosine is present on Tyr-275. Residue Thr-287 is modified to Phosphothreonine. Ser-295 is subject to Phosphoserine. Arg-318 and Ser-345 together coordinate substrate. The residue at position 345 (Ser-345) is a Phosphoserine. Lys-352 is covalently cross-linked (Glycyl lysine isopeptide (Lys-Gly) (interchain with G-Cter in SUMO2)). The Proton donor role is filled by Glu-366. Thiamine diphosphate is bound at residue Phe-392. Substrate contacts are provided by His-416 and Asp-424. Gln-428 is a binding site for thiamine diphosphate. Arg-474 provides a ligand contact to substrate. Lys-538 and Lys-603 each carry N6-acetyllysine.

It belongs to the transketolase family. As to quaternary structure, homodimer. The cofactor is Mg(2+). Ca(2+) serves as cofactor. Mn(2+) is required as a cofactor. Requires Co(2+) as cofactor. It depends on thiamine diphosphate as a cofactor.

The enzyme catalyses D-sedoheptulose 7-phosphate + D-glyceraldehyde 3-phosphate = aldehydo-D-ribose 5-phosphate + D-xylulose 5-phosphate. Catalyzes the transfer of a two-carbon ketol group from a ketose donor to an aldose acceptor, via a covalent intermediate with the cofactor thiamine pyrophosphate. The sequence is that of Transketolase (Tkt) from Rattus norvegicus (Rat).